Reading from the N-terminus, the 909-residue chain is Protein translocase subunit SecA (909 aa).

Residues Gln-87, 105-109, and Asp-507 contribute to the ATP site; that span reads GEGKT. Residues 834 to 909 form a disordered region; that stretch reads EAVEEQRRRQ…KYKQCCGKLS (76 aa). The segment covering 837–848 has biased composition (basic and acidic residues); sequence EEQRRRQGDMQY. The span at 859–871 shows a compositional bias: gly residues; it reads QGAGGEGAAGGTA. Zn(2+) is bound by residues Cys-893, Cys-895, Cys-904, and Cys-905.

This sequence belongs to the SecA family. Monomer and homodimer. Part of the essential Sec protein translocation apparatus which comprises SecA, SecYEG and auxiliary proteins SecDF-YajC and YidC. Zn(2+) serves as cofactor.

Its subcellular location is the cell inner membrane. It localises to the cytoplasm. The enzyme catalyses ATP + H2O + cellular proteinSide 1 = ADP + phosphate + cellular proteinSide 2.. In terms of biological role, part of the Sec protein translocase complex. Interacts with the SecYEG preprotein conducting channel. Has a central role in coupling the hydrolysis of ATP to the transfer of proteins into and across the cell membrane, serving both as a receptor for the preprotein-SecB complex and as an ATP-driven molecular motor driving the stepwise translocation of polypeptide chains across the membrane. In Alkalilimnicola ehrlichii (strain ATCC BAA-1101 / DSM 17681 / MLHE-1), this protein is Protein translocase subunit SecA.